Here is a 254-residue protein sequence, read N- to C-terminus: Pyridoxine 5'-phosphate synthase (254 aa).

Asn-12 lines the 3-amino-2-oxopropyl phosphate pocket. 14-15 contributes to the 1-deoxy-D-xylulose 5-phosphate binding site; sequence DH. Arg-23 is a binding site for 3-amino-2-oxopropyl phosphate. His-48 functions as the Proton acceptor in the catalytic mechanism. Residues Arg-50 and His-55 each coordinate 1-deoxy-D-xylulose 5-phosphate. The active-site Proton acceptor is Glu-75. Thr-105 lines the 1-deoxy-D-xylulose 5-phosphate pocket. His-199 serves as the catalytic Proton donor. 3-amino-2-oxopropyl phosphate contacts are provided by residues Gly-200 and 221–222; that span reads GF.

Belongs to the PNP synthase family. As to quaternary structure, homooctamer; tetramer of dimers.

Its subcellular location is the cytoplasm. It catalyses the reaction 3-amino-2-oxopropyl phosphate + 1-deoxy-D-xylulose 5-phosphate = pyridoxine 5'-phosphate + phosphate + 2 H2O + H(+). It participates in cofactor biosynthesis; pyridoxine 5'-phosphate biosynthesis; pyridoxine 5'-phosphate from D-erythrose 4-phosphate: step 5/5. Catalyzes the complicated ring closure reaction between the two acyclic compounds 1-deoxy-D-xylulose-5-phosphate (DXP) and 3-amino-2-oxopropyl phosphate (1-amino-acetone-3-phosphate or AAP) to form pyridoxine 5'-phosphate (PNP) and inorganic phosphate. The protein is Pyridoxine 5'-phosphate synthase of Rhodopseudomonas palustris (strain HaA2).